We begin with the raw amino-acid sequence, 196 residues long: Transmembrane protein 52 (196 aa).

The first 28 residues, 1 to 28 (MAPGPSATQGILLLLPLLPLSQVTLGSA), serve as a signal peptide directing secretion. A helical transmembrane segment spans residues 47–67 (LWHVGLILLAILLMLLCGVTA). The interval 162–196 (EEVAAPSEKTNSLPEALEPETTGGPQEPGPSAQRP) is disordered.

It localises to the membrane. This chain is Transmembrane protein 52 (Tmem52), found in Mus musculus (Mouse).